Here is a 196-residue protein sequence, read N- to C-terminus: MLWELLNLLDLRYRFLQQLDLYFLNLNYTLSKLCSKQTEATAPYSKLYYKNLGLAFFYFFFFLLAFLALFIFFFRGFQGTLFFNSVLLSNKGLYFVLFYVAALALLFVFRHHVLKQFFFNNSLDFLIALVFLTLFSTLIFFSNNLFAFFFTLELVAVTNFYFISSAREFFFFEKSQGGASSLKAQKKKTFFNVRFF.

The protein localises to the mitochondrion. This is an uncharacterized protein from Paramecium tetraurelia.